A 287-amino-acid polypeptide reads, in one-letter code: IQ domain-containing protein K (287 aa).

The protein is IQ domain-containing protein K (IQCK) of Homo sapiens (Human).